Reading from the N-terminus, the 382-residue chain is Cholinephosphotransferase 1 (382 aa).

Over 1–51 the chain is Cytoplasmic; sequence MPQCECPEPLSAVQLKRLEEHKYSAAGRSLFEPPCQIYWNWLVQQIPTWVA. The helical transmembrane segment at 52–72 threads the bilayer; it reads PNTLTTIGLVINVITTVILVY. Asparagine 53 is a binding site for CDP-choline. The Lumenal portion of the chain corresponds to 73 to 82; it reads YSPTATEEVP. A helical membrane pass occupies residues 83–107; it reads GWAFFLSALGLFIYQSLDAIDGKQA. Residues aspartate 100 and aspartate 103 each coordinate Mg(2+). Position 108 (arginine 108) interacts with CDP-choline. Topologically, residues 108-114 are cytoplasmic; that stretch reads RRTNSSS. A helical transmembrane segment spans residues 115–139; the sequence is ALGELFDHGCDAVSTVFVAVGTCIC. Aspartate 121 is a binding site for Mg(2+). Histidine 122 functions as the Proton acceptor in the catalytic mechanism. Aspartate 125 contacts Mg(2+). Residues 140–149 are Lumenal-facing; that stretch reads CGIGAYPNWM. A helical membrane pass occupies residues 150–168; the sequence is FFCGFVGMFMFFCAHWQTY. Topologically, residues 169–179 are cytoplasmic; it reads VSGTLRFGLVD. A helical membrane pass occupies residues 180–196; that stretch reads VTEVQIAIIIMYLLTAF. Over 197 to 211 the chain is Lumenal; it reads TGVSFWEMRVPVLGV. A helical membrane pass occupies residues 212–237; it reads NLQTFPILGIIGGFLYSTYNYFFVIM. Over 238–254 the chain is Cytoplasmic; the sequence is NGGVGKNGSTVADTSVL. A helical transmembrane segment spans residues 255–270; it reads TPGLHIGLILTLAFII. The Lumenal portion of the chain corresponds to 271 to 282; the sequence is FKKSSSHLFEHH. The helical transmembrane segment at 283–305 threads the bilayer; sequence PCLYVLTFGMVIAKISNKLVVAH. At 306–318 the chain is on the cytoplasmic side; it reads MTKSELHLQDTAF. The chain crosses the membrane as a helical span at residues 319-328; sequence IGPGLLFLNQ. The Lumenal portion of the chain corresponds to 329–335; the sequence is YFNSYID. A helical transmembrane segment spans residues 336-365; the sequence is EHIVLWIAMVLSLVDLVRYCTAVCLQIASH. The Cytoplasmic portion of the chain corresponds to 366–382; sequence LRIRVFSISPQGHAHKD.

It belongs to the CDP-alcohol phosphatidyltransferase class-I family. Mg(2+) serves as cofactor. The cofactor is Mn(2+).

The protein localises to the golgi apparatus membrane. The catalysed reaction is CDP-choline + a 1,2-diacyl-sn-glycerol = a 1,2-diacyl-sn-glycero-3-phosphocholine + CMP + H(+). It catalyses the reaction 1-octadecanoyl-2-(5Z,8Z,11Z,14Z-eicosatetraenoyl)-sn-glycerol + CDP-choline = 1-octadecanoyl-2-(5Z,8Z,11Z,14Z-eicosatetraenoyl)-sn-glycero-3-phosphocholine + CMP + H(+). It carries out the reaction 1-hexadecanoyl-2-(9Z-octadecenoyl)-sn-glycerol + CDP-choline = 1-hexadecanoyl-2-(9Z-octadecenoyl)-sn-glycero-3-phosphocholine + CMP + H(+). The enzyme catalyses 1-hexadecanoyl-2-(4Z,7Z,10Z,13Z,16Z,19Z-docosahexaenoyl)-sn-glycerol + CDP-choline = 1-hexadecanoyl-2-(4Z,7Z,10Z,13Z,16Z,19Z-docosahexaenoyl)-sn-glycero-3-phosphocholine + CMP + H(+). The catalysed reaction is 1,2-dioctanoyl-sn-glycerol + CDP-choline = 1,2-dioctanoyl-sn-glycero-3-phosphocholine + CMP + H(+). It functions in the pathway phospholipid metabolism; phosphatidylcholine biosynthesis; phosphatidylcholine from phosphocholine: step 2/2. In terms of biological role, catalyzes the final step of de novo phosphatidylcholine (PC) synthesis, i.e. the transfer of choline phosphate from CDP-choline to the free hydroxyl of a diacylglycerol (DAG), producing a PC. It thereby plays a central role in the formation and maintenance of vesicular membranes. In Danio rerio (Zebrafish), this protein is Cholinephosphotransferase 1 (chpt1).